The primary structure comprises 509 residues: Lysine--tRNA ligase (509 aa).

Residues Glu-395 and Glu-402 each coordinate Mg(2+).

Belongs to the class-II aminoacyl-tRNA synthetase family. Homodimer. Requires Mg(2+) as cofactor.

The protein resides in the cytoplasm. The enzyme catalyses tRNA(Lys) + L-lysine + ATP = L-lysyl-tRNA(Lys) + AMP + diphosphate. The chain is Lysine--tRNA ligase from Fervidobacterium nodosum (strain ATCC 35602 / DSM 5306 / Rt17-B1).